Reading from the N-terminus, the 309-residue chain is tRNA pseudouridine synthase B (309 aa).

Asp39 serves as the catalytic Nucleophile.

The protein belongs to the pseudouridine synthase TruB family. Type 1 subfamily.

The enzyme catalyses uridine(55) in tRNA = pseudouridine(55) in tRNA. Its function is as follows. Responsible for synthesis of pseudouridine from uracil-55 in the psi GC loop of transfer RNAs. In Bacillus velezensis (strain DSM 23117 / BGSC 10A6 / LMG 26770 / FZB42) (Bacillus amyloliquefaciens subsp. plantarum), this protein is tRNA pseudouridine synthase B.